The sequence spans 634 residues: RING finger protein 207 (634 aa).

The RING-type zinc-finger motif lies at 25-64; it reads CPLCHVQYERPCLLDCFHDFCAGCLRGRATDGRLTCPLCQ. The B box-type; atypical zinc-finger motif lies at 93–145; it reads VEAVRCANCDLECSEQDVETTYFCNTCGQPLCARCRDETHRARMFARHDIVAL. Zn(2+)-binding residues include C98, C101, C127, and H132. Coiled coils occupy residues 422-457 and 494-518; these read EHCRHYEDSYRHLQAEMQSLKDQVQELHRDLTKHHS and EIWEEAYQRVANEQEIYEAQLHDLL. Residues 552–634 are disordered; it reads FQAPVDEQSE…DVPTWREHPT (83 aa).

Interacts with the core-glycosylated, but not the fully glycosylated form of KCNH2/HERG. Interacts with DNAJA1 and HSPA8. Interacts (via the C-terminus) with HSPA1A; this interaction additively increases KCNH2 expression.

The protein localises to the cytoplasm. Plays a role in cardiac repolarization possibly by stabilizing membrane expression of the potassium channel KCNH2/HERG, or by assisting its synthesis, folding or export from the endoplasmic reticulum, in a heat shock protein-dependent manner. This chain is RING finger protein 207 (RNF207), found in Homo sapiens (Human).